A 236-amino-acid polypeptide reads, in one-letter code: Eukaryotic translation initiation factor 3 subunit J (236 aa).

The interval M1 to R84 is disordered. A compositionally biased stretch (acidic residues) spans G28 to K46. Composition is skewed to basic and acidic residues over residues D47–A58 and A68–E77.

It belongs to the eIF-3 subunit J family. In terms of assembly, component of the eukaryotic translation initiation factor 3 (eIF-3) complex. The eIF-3 complex interacts with pix.

It localises to the cytoplasm. Its function is as follows. Component of the eukaryotic translation initiation factor 3 (eIF-3) complex, which is involved in protein synthesis of a specialized repertoire of mRNAs and, together with other initiation factors, stimulates binding of mRNA and methionyl-tRNAi to the 40S ribosome. The eIF-3 complex specifically targets and initiates translation of a subset of mRNAs involved in cell proliferation. This is Eukaryotic translation initiation factor 3 subunit J from Drosophila yakuba (Fruit fly).